A 1004-amino-acid polypeptide reads, in one-letter code: MVDSSSYGLLQYFQKLSDEEFQRFKELLQKEQEKFKLKPLSWTKIKNTSKEDLVTQLYTHYPRQVWDMVLNLFLQVNRKDLSTMAQIERRDKQNKYKEFMKNLFQYIWTSETNTYMPDRSYNTIIDRQYKALLDIFDSESDPATAVVLGTRGKGKTVFLRKAMLDWASGVLLQNRFQYVFFFSVFSLNNTTELSLAELISSKLPECSETLDDILSNPKRILFVLDGFDYLKFDLELRTNLCNDWRKRLPTQNVLSSLLQKIMLPECSLLLELGESSCSKIIPLLQNPREIIMSGLSEQSIYFYCVSFFKIQLGVEVFKDLKKNEPLFTLCSNPSMLWMICSSLMWGHYSREEVISSSESTSAIHTIFIMSAFKSIFGLGSSKYKRFKLKTLCTLAVEGMWKQVYVFDSEDLRRNKISESDKTVWLKMKFLQIQGNNIMFYHSTLQWYFATLFYFLKQDKDTYHPVIGSLPQLLGEIYAHKQNQWTHAQTFFFGIATKHVITLLKPCFGNISFKTIRQEIIRYLKSLSQPECNEKLVHPKKLFFCLIENQEERFVSQVMNLFEEITVDISDSDDLGAAEYSLLRASKLKNLHLHIQKKVFSEIHDPEYGSLENFKLDQKFSAINWTMLSILFCNLHVLDLGSCHFNKKVIEVLCNSLSPTPNMPLTVFKLQRLLCSFMTNFGDGSLFCTFLQIPQLKYLNLYGTDLSNDVVEMLCSALKCSTCRVEELLLGKCDISSEACGIMATFLINSKVKHLSLVENPLKNKGVMFLCKMLKDPSCVLESLMLSYCCLTFIACGHLYEALLSNKHLSLLDLGSNFLEDIGVNLLCEALKYPNCTLKELWLPGCYLTSECCEEISAVLTCNKNLKTLKLGNNNIQDTGVKRLCEALCHPKCKVQCLGLDMCELSNDCCEDLALALITCNTLKSLNLDWNALHHSGLVMLCEALNHKKCKLNMLGLDKSSFSEESQTFLQAVEKKNNNLNVLHFPWVEDELKKRGVRLVWNSKN.

Residues 1 to 92 enclose the Pyrin domain; the sequence is MVDSSSYGLL…TMAQIERRDK (92 aa). The 323-residue stretch at 143–465 folds into the NACHT domain; that stretch reads ATAVVLGTRG…KQDKDTYHPV (323 aa). 149 to 156 provides a ligand contact to ATP; sequence GTRGKGKT. LRR repeat units follow at residues 750–770, 779–800, 807–828, 836–857, and 864–884; these read KVKH…MFLC, VLES…HLYE, HLSL…LLCE, TLKE…EISA, and NLKT…KRLC.

This sequence belongs to the NLRP family. In terms of tissue distribution, oocyte specific.

The protein localises to the cytoplasm. Its function is as follows. May be involved in inflammation. This Mus musculus (Mouse) protein is NACHT, LRR and PYD domains-containing protein 9C (Nlrp9c).